The chain runs to 249 residues: Enolase-phosphatase E1 (249 aa).

Mg(2+) contacts are provided by Asp15 and Glu17. Substrate-binding positions include 146 to 147 (SS) and Lys180. Residue Asp205 coordinates Mg(2+).

Belongs to the HAD-like hydrolase superfamily. MasA/MtnC family. As to quaternary structure, monomer. It depends on Mg(2+) as a cofactor.

Its subcellular location is the cytoplasm. The protein resides in the nucleus. The enzyme catalyses 5-methylsulfanyl-2,3-dioxopentyl phosphate + H2O = 1,2-dihydroxy-5-(methylsulfanyl)pent-1-en-3-one + phosphate. It functions in the pathway amino-acid biosynthesis; L-methionine biosynthesis via salvage pathway; L-methionine from S-methyl-5-thio-alpha-D-ribose 1-phosphate: step 3/6. It participates in amino-acid biosynthesis; L-methionine biosynthesis via salvage pathway; L-methionine from S-methyl-5-thio-alpha-D-ribose 1-phosphate: step 4/6. Its function is as follows. Bifunctional enzyme that catalyzes the enolization of 2,3-diketo-5-methylthiopentyl-1-phosphate (DK-MTP-1-P) into the intermediate 2-hydroxy-3-keto-5-methylthiopentenyl-1-phosphate (HK-MTPenyl-1-P), which is then dephosphorylated to form the acireductone 1,2-dihydroxy-3-keto-5-methylthiopentene (DHK-MTPene). This Caenorhabditis briggsae protein is Enolase-phosphatase E1.